The primary structure comprises 395 residues: Multidrug resistance protein MdtL (395 aa).

Residues Met1–Arg3 lie on the Cytoplasmic side of the membrane. Residues Phe4–Val24 form a helical membrane-spanning segment. Residues Gly25 to His41 are Periplasmic-facing. The chain crosses the membrane as a helical span at residues Ile42–Ala62. Residues Asp63 to Lys68 are Cytoplasmic-facing. The helical transmembrane segment at Pro69–Ser89 threads the bilayer. Residues Glu90–Ser92 lie on the Periplasmic side of the membrane. Residues Leu93–Phe113 traverse the membrane as a helical segment. The Cytoplasmic portion of the chain corresponds to Ala114–Ser130. A helical transmembrane segment spans residues Leu131–Met151. Residues Leu152–Gln157 are Periplasmic-facing. Residues Ser158–Leu178 form a helical membrane-spanning segment. Residues Arg179–Ser216 lie on the Cytoplasmic side of the membrane. A helical transmembrane segment spans residues Val217–Phe237. The Periplasmic portion of the chain corresponds to Ser238–Met246. A helical membrane pass occupies residues Ala247–Phe267. The Cytoplasmic portion of the chain corresponds to Lys268–Arg270. The chain crosses the membrane as a helical span at residues Thr271–His291. Residues Thr292–Thr294 lie on the Periplasmic side of the membrane. Residues Val295 to Met315 traverse the membrane as a helical segment. Residues Ser316–Gly327 are Cytoplasmic-facing. A helical membrane pass occupies residues Val328–Ile350. Residues Leu351–Ser354 lie on the Periplasmic side of the membrane. Residues Ala355–Val377 traverse the membrane as a helical segment. Residues Thr378–Pro395 lie on the Cytoplasmic side of the membrane.

The protein belongs to the major facilitator superfamily. DHA1 family. MdtL (TC 2.A.1.2.22) subfamily.

The protein localises to the cell inner membrane. The sequence is that of Multidrug resistance protein MdtL (mdtL) from Salmonella typhimurium (strain LT2 / SGSC1412 / ATCC 700720).